The primary structure comprises 215 residues: Pyrrolidone-carboxylate peptidase (215 aa).

Active-site residues include Glu-81, Cys-144, and His-168.

Belongs to the peptidase C15 family. As to quaternary structure, homotetramer.

The protein localises to the cytoplasm. It catalyses the reaction Release of an N-terminal pyroglutamyl group from a polypeptide, the second amino acid generally not being Pro.. Removes 5-oxoproline from various penultimate amino acid residues except L-proline. The sequence is that of Pyrrolidone-carboxylate peptidase from Bacillus velezensis (strain DSM 23117 / BGSC 10A6 / LMG 26770 / FZB42) (Bacillus amyloliquefaciens subsp. plantarum).